The sequence spans 421 residues: Dihydroorotase (421 aa).

Residues His60 and His62 each coordinate Zn(2+). Substrate contacts are provided by residues 62 to 64 (HFR) and Asn94. The Zn(2+) site is built by Asp151, His178, and His231. Substrate is bound at residue Asn277. Asp304 serves as a coordination point for Zn(2+). Asp304 is a catalytic residue. His308 is a binding site for substrate.

Belongs to the metallo-dependent hydrolases superfamily. DHOase family. Class I DHOase subfamily. Requires Zn(2+) as cofactor.

It catalyses the reaction (S)-dihydroorotate + H2O = N-carbamoyl-L-aspartate + H(+). It participates in pyrimidine metabolism; UMP biosynthesis via de novo pathway; (S)-dihydroorotate from bicarbonate: step 3/3. Catalyzes the reversible cyclization of carbamoyl aspartate to dihydroorotate. The polypeptide is Dihydroorotase (Clostridioides difficile (strain 630) (Peptoclostridium difficile)).